The chain runs to 423 residues: UDP-N-acetylglucosamine 1-carboxyvinyltransferase 2 (423 aa).

K23–N24 is a phosphoenolpyruvate binding site. Residue R96 participates in UDP-N-acetyl-alpha-D-glucosamine binding. Catalysis depends on C120, which acts as the Proton donor. Position 120 is a 2-(S-cysteinyl)pyruvic acid O-phosphothioketal (C120). Residues R125–L129, D309, and V331 contribute to the UDP-N-acetyl-alpha-D-glucosamine site.

Belongs to the EPSP synthase family. MurA subfamily.

Its subcellular location is the cytoplasm. It carries out the reaction phosphoenolpyruvate + UDP-N-acetyl-alpha-D-glucosamine = UDP-N-acetyl-3-O-(1-carboxyvinyl)-alpha-D-glucosamine + phosphate. The protein operates within cell wall biogenesis; peptidoglycan biosynthesis. In terms of biological role, cell wall formation. Adds enolpyruvyl to UDP-N-acetylglucosamine. The sequence is that of UDP-N-acetylglucosamine 1-carboxyvinyltransferase 2 from Streptococcus agalactiae serotype Ia (strain ATCC 27591 / A909 / CDC SS700).